We begin with the raw amino-acid sequence, 95 residues long: Small ribosomal subunit protein bS6 (95 aa).

This sequence belongs to the bacterial ribosomal protein bS6 family.

In terms of biological role, binds together with bS18 to 16S ribosomal RNA. In Shouchella clausii (strain KSM-K16) (Alkalihalobacillus clausii), this protein is Small ribosomal subunit protein bS6.